Consider the following 446-residue polypeptide: MEKYLSVTTLTKYLKMKFDKDPYLERVYLTGQVSNFRKRPTHQYFSLKDDHAVIQATIWSGIYQKLGFDLEEGMKINVIGRVQVYEPSGSYSIIIEKAEPDGVGALAIQFEQLKKKLTEEGLFQERFKQALPQFSKRIGVVTSRSGAVIRDIITTVSRRFPGVDILLYPTKVQGEGAAEEIARNIARANQRDDLDLLIIGRGGGSIEDLWAFNEEIVVRAIFESRLPVISSVGHETDVTLADFVADRRAATPTAAAELATPVTKLDVLAHLQNQEKRMVTAVRNVLSKKQEALKKCSQSVIFRQPERLYDGYLQRLDQLQLRLKQSLRTRISDNKQLVQARTHQLVQLSPVTKIQRYQDRLGQLDKLLGSQMALVYDAKVAEVKRLSEALLMLDTSRIVARGYAIVKKEESVVDSVESLKKKDQVTLLMRDGQVELEVKDVKTKEI.

This sequence belongs to the XseA family. In terms of assembly, heterooligomer composed of large and small subunits.

It is found in the cytoplasm. It carries out the reaction Exonucleolytic cleavage in either 5'- to 3'- or 3'- to 5'-direction to yield nucleoside 5'-phosphates.. Its function is as follows. Bidirectionally degrades single-stranded DNA into large acid-insoluble oligonucleotides, which are then degraded further into small acid-soluble oligonucleotides. This is Exodeoxyribonuclease 7 large subunit from Streptococcus pneumoniae serotype 19F (strain G54).